The chain runs to 456 residues: Enolase (456 aa).

A (2R)-2-phosphoglycerate-binding site is contributed by Gln-164. Glu-207 serves as the catalytic Proton donor. Residues Asp-244, Glu-287, and Asp-314 each contribute to the Mg(2+) site. (2R)-2-phosphoglycerate-binding residues include Lys-339, Arg-368, Ser-369, and Lys-390. Lys-339 serves as the catalytic Proton acceptor.

Belongs to the enolase family. In terms of assembly, component of the RNA degradosome, a multiprotein complex involved in RNA processing and mRNA degradation. Requires Mg(2+) as cofactor.

The protein resides in the cytoplasm. It localises to the secreted. The protein localises to the cell surface. The enzyme catalyses (2R)-2-phosphoglycerate = phosphoenolpyruvate + H2O. Its pathway is carbohydrate degradation; glycolysis; pyruvate from D-glyceraldehyde 3-phosphate: step 4/5. Functionally, catalyzes the reversible conversion of 2-phosphoglycerate (2-PG) into phosphoenolpyruvate (PEP). It is essential for the degradation of carbohydrates via glycolysis. This chain is Enolase, found in Francisella tularensis subsp. holarctica (strain LVS).